The following is a 185-amino-acid chain: Large ribosomal subunit protein uL5 (185 aa).

It belongs to the universal ribosomal protein uL5 family. As to quaternary structure, part of the 50S ribosomal subunit; part of the 5S rRNA/L5/L18/L25 subcomplex. Contacts the 5S rRNA and the P site tRNA. Forms a bridge to the 30S subunit in the 70S ribosome.

In terms of biological role, this is one of the proteins that bind and probably mediate the attachment of the 5S RNA into the large ribosomal subunit, where it forms part of the central protuberance. In the 70S ribosome it contacts protein S13 of the 30S subunit (bridge B1b), connecting the 2 subunits; this bridge is implicated in subunit movement. Contacts the P site tRNA; the 5S rRNA and some of its associated proteins might help stabilize positioning of ribosome-bound tRNAs. This chain is Large ribosomal subunit protein uL5, found in Azorhizobium caulinodans (strain ATCC 43989 / DSM 5975 / JCM 20966 / LMG 6465 / NBRC 14845 / NCIMB 13405 / ORS 571).